The sequence spans 217 residues: Thiosulfate dehydrogenase electron acceptor (217 aa).

Positions 1 to 28 are cleaved as a signal peptide; sequence MRQFIPMRRVLAVATLGALFWAAPASWA. Cytochrome c domains are found at residues 29–104 and 116–206; these read AAPP…SKLK and AAAA…AAQP. C37, C40, H41, C137, C140, and H141 together coordinate heme c.

In terms of processing, binds 2 heme c groups covalently per subunit.

Functionally, acts as an electron acceptor for the thiosulfate dehydrogenase TsdA. The sequence is that of Thiosulfate dehydrogenase electron acceptor (tsdB) from Thiomonas intermedia (strain K12) (Thiobacillus intermedius).